The primary structure comprises 266 residues: uncharacterized protein (266 aa).

Residues 12–28 (ILAAGLAIGCAGGYYAY) form a helical membrane-spanning segment. The region spanning 40-140 (EIYAPFTVNK…RGPFKTTKLD (101 aa)) is the FAD-binding FR-type domain.

Belongs to the flavoprotein pyridine nucleotide cytochrome reductase family. FAD is required as a cofactor.

It localises to the mitochondrion outer membrane. This is an uncharacterized protein from Schizosaccharomyces pombe (strain 972 / ATCC 24843) (Fission yeast).